Reading from the N-terminus, the 752-residue chain is Polyribonucleotide nucleotidyltransferase (752 aa).

D519 and D525 together coordinate Mg(2+). A KH domain is found at 585–644 (PRVIAVKIPVDKIGEVIGPKGKMINQIQEDTGADISIEDDGTVYIGATNGPSADAARSAI). The S1 motif domain occupies 656–728 (GERYLGTVVK…DRGKLSLSPV (73 aa)). The disordered stretch occupies residues 727 to 752 (PVVAEEEGAEGAERAHATEPAEGAEI).

This sequence belongs to the polyribonucleotide nucleotidyltransferase family. Mg(2+) is required as a cofactor.

It is found in the cytoplasm. It carries out the reaction RNA(n+1) + phosphate = RNA(n) + a ribonucleoside 5'-diphosphate. Functionally, involved in mRNA degradation. Catalyzes the phosphorolysis of single-stranded polyribonucleotides processively in the 3'- to 5'-direction. This Pseudarthrobacter chlorophenolicus (strain ATCC 700700 / DSM 12829 / CIP 107037 / JCM 12360 / KCTC 9906 / NCIMB 13794 / A6) (Arthrobacter chlorophenolicus) protein is Polyribonucleotide nucleotidyltransferase.